Here is a 146-residue protein sequence, read N- to C-terminus: Ecotin-like protein 1 (146 aa).

Belongs to the protease inhibitor I11 (ecotin) family.

In Leishmania major, this protein is Ecotin-like protein 1 (ISP1).